Here is a 266-residue protein sequence, read N- to C-terminus: NADP-dependent mannitol dehydrogenase (266 aa).

NADP(+) contacts are provided by Asn-107 and Lys-140. Ser-159 (proton donor) is an active-site residue. Residues Tyr-174, Lys-178, Ile-206, and Thr-208 each coordinate NADP(+). Tyr-174 acts as the Proton acceptor in catalysis. Catalysis depends on Lys-178, which acts as the Lowers pKa of active site Tyr.

It belongs to the short-chain dehydrogenases/reductases (SDR) family. Homotetramer.

The catalysed reaction is D-mannitol + NADP(+) = D-fructose + NADPH + H(+). Its function is as follows. Catalyzes the interconversion between D-mannitol and D-fructose. Plays a key role in liamocins biosynthesis by providing the mannitol moity that is linked to 3,5-dihydroxydecanoic acid (provided by the HR-PKS PKS1) via ester bond formation catalyzed by the esterase EST1. The chain is NADP-dependent mannitol dehydrogenase from Aureobasidium melanogenum (Aureobasidium pullulans var. melanogenum).